The following is a 478-amino-acid chain: MAEAAAPGTTATTSGAAAAAAVAAASPTLTPTVASQSPAAGGGGGGSGGGWTKQVTCRYFMHGVCKKGNNCRYSHDLSTSQSAMVCRYYQRGCCAYGDRCRYEHTKPLKREEVTAANLAAKSDLPASSSLPALVEPLAEVSTGEAESVNSNFAAAGAGGEDWVNAIEFVPGQPYCGRAAPSCTEAPLQGMVIEEELEKQQTNVEMKKQLCPYAAVGECRYGENCVYLHGDACDMCGLQVLHPVDAAQRSQHIKSCIEAHEKDMELSFAVQRSKDMVCGICMEVVYEKANPSERRFGILSNCNHTYCLKCIRKWRSAKQFESKIIKSCPECRITSNFVIPSEYWVEEKEEKQKLIQKYKEAMSNKPCRYFDEGRGSCPFGGNCFYKHAYPDGRREEPQRQKVGTSNRYRAQRRNRFWELIEERESSNPFDNDEDEVVTFELGEMLLMLLAAGGDDDLTDPEDEWDLFHDELEDYYDLDL.

3 C3H1-type zinc fingers span residues 51-78, 80-107, and 204-231; these read WTKQ…HDLS, SQSA…HTKP, and EMKK…HGDA. Residues 232-259 form a makorin-type Cys-His region; it reads CDMCGLQVLHPVDAAQRSQHIKSCIEAH. The RING-type zinc finger occupies 277–331; sequence CGICMEVVYEKANPSERRFGILSNCNHTYCLKCIRKWRSAKQFESKIIKSCPECR. The segment at 360–389 adopts a C3H1-type 4 zinc-finger fold; it reads AMSNKPCRYFDEGRGSCPFGGNCFYKHAYP.

Interacts with p53/TP53 and CDKN1A. Interacts with TERT, modulating telomere length homeostasis. Auto-ubiquitinated; which leads to proteasomal degradation.

It catalyses the reaction S-ubiquitinyl-[E2 ubiquitin-conjugating enzyme]-L-cysteine + [acceptor protein]-L-lysine = [E2 ubiquitin-conjugating enzyme]-L-cysteine + N(6)-ubiquitinyl-[acceptor protein]-L-lysine.. It functions in the pathway protein modification; protein ubiquitination. In terms of biological role, E3 ubiquitin ligase catalyzing the covalent attachment of ubiquitin moieties onto substrate proteins. These substrates include FILIP1, p53/TP53, CDKN1A and TERT. Keeps cells alive by suppressing p53/TP53 under normal conditions, but stimulates apoptosis by repressing CDKN1A under stress conditions. Acts as a negative regulator of telomerase. Has negative and positive effects on RNA polymerase II-dependent transcription. This chain is E3 ubiquitin-protein ligase makorin-1 (MKRN1), found in Notamacropus eugenii (Tammar wallaby).